The following is a 209-amino-acid chain: Mitochondrial import inner membrane translocase subunit Tim23 (209 aa).

A run of 3 helical transmembrane segments spans residues 73–93 (FELA…FGAM), 125–145 (ALWA…GVII), and 172–194 (GGLR…YALY).

It belongs to the Tim17/Tim22/Tim23 family. Component of the TIM23 complex at least composed of TIMM23, TIMM17 (TIMM17A or TIMM17B) and TIMM50; within this complex, directly interacts with TIMM50. The complex interacts with the TIMM44 component of the PAM complex and with DNAJC15. Upon mitochondrial depolarization, interacts with PINK1; the interaction is required for PINK1 accumulation at the outer mitochondrial membrane, kinase activation by autophosphorylation and PRKN recruitement to mitochondria.

The protein resides in the mitochondrion inner membrane. Its function is as follows. Essential component of the TIM23 complex, a complex that mediates the translocation of transit peptide-containing proteins across the mitochondrial inner membrane. Has a role in the activation of stress-induced mitophagy by protecting PINK1 from OMA1-mediated degradation and facilitating its accumulation at the outer mitochondrial membrane in response to depolarization. The polypeptide is Mitochondrial import inner membrane translocase subunit Tim23 (TIMM23) (Bos taurus (Bovine)).